We begin with the raw amino-acid sequence, 152 residues long: Cell division protein SepF (152 aa).

Over residues 23 to 32 (EVAREPEPMQ) the composition is skewed to basic and acidic residues. The segment at 23 to 42 (EVAREPEPMQKKTKKEKPSK) is disordered.

This sequence belongs to the SepF family. In terms of assembly, homodimer. Interacts with FtsZ.

The protein resides in the cytoplasm. Functionally, cell division protein that is part of the divisome complex and is recruited early to the Z-ring. Probably stimulates Z-ring formation, perhaps through the cross-linking of FtsZ protofilaments. Its function overlaps with FtsA. The polypeptide is Cell division protein SepF (Listeria innocua serovar 6a (strain ATCC BAA-680 / CLIP 11262)).